Consider the following 520-residue polypeptide: Cytochrome b5 reductase 4 (520 aa).

An N-acetylmethionine modification is found at Met-1. Residues 1–16 show a composition bias toward low complexity; sequence MLNVPSQSFPGPSSQQ. Positions 1 to 27 are disordered; sequence MLNVPSQSFPGPSSQQRVASGGRSKVP. Residues 54–130 enclose the Cytochrome b5 heme-binding domain; that stretch reads LIEVTEEELK…LKECLVGRMA (77 aa). 2 residues coordinate heme: His-89 and His-112. Residues 164–255 form the CS domain; the sequence is PSSPSYDWFQ…KENTSWKCLG (92 aa). The FAD-binding FR-type domain maps to 272–384; that stretch reads LFYRKCQLVS…SNPEGNFIIS (113 aa). FAD contacts are provided by residues 364-379 and 391-423; these read DQLQIGDYVSVSNPEG and DLFLLAAGTGFTPMVKVLNYALTNIPSLRKVKL.

The protein belongs to the flavoprotein pyridine nucleotide cytochrome reductase family. FAD is required as a cofactor.

It localises to the endoplasmic reticulum. It catalyses the reaction 2 Fe(III)-[cytochrome b5] + NADH = 2 Fe(II)-[cytochrome b5] + NAD(+) + H(+). In terms of biological role, NADH-cytochrome b5 reductase involved in endoplasmic reticulum stress response pathway. Plays a critical role in protecting pancreatic beta-cells against oxidant stress, possibly by protecting the cell from excess buildup of reactive oxygen species (ROS). The sequence is that of Cytochrome b5 reductase 4 (CYB5R4) from Bos taurus (Bovine).